A 343-amino-acid chain; its full sequence is MSGPPSHEIGMLYSLAPSVDMKSENIEDLPSESIPTTNHCASNYFYAPECPDIGHLRALSIMNRWTETEFVISDDLRDVSMLTEEERYFYRFLFTFLSAADDLVNLNIDNLLGLFSQKDIHHYYFEQECIEAVHSRAYSIIQLMLFDNDSLARAEYVKTSLNSPAIQSKLDWLNKRVIECSSIAEKYILMILIEGIFFSASFAAIAYLRINNLFVVTCQINNLISRDEAIHVEASCCIFKNYLMGPKPSIGRVQELFKEAVQIECAFLRTAAPRNSQLLDVEAICSYVRYSADRLLKELDMPPIYNEPKPTADFPLALMTASNNTNFFERRNTAYSGSVSNDL.

Residues D101, E131, and H134 each contribute to the Fe cation site. Y138 is an active-site residue. A helical membrane pass occupies residues 188 to 208; the sequence is ILMILIEGIFFSASFAAIAYL. Positions 194, 228, and 231 each coordinate Fe cation.

This sequence belongs to the ribonucleoside diphosphate reductase small chain family. Heterotetramer composed of a homodimer of the large subunit (R1) and a homodimer of the small subunit (R2). Larger multisubunit protein complex are also active, composed of (R1)n(R2)n. The cofactor is Fe cation.

Its subcellular location is the host membrane. The catalysed reaction is a 2'-deoxyribonucleoside 5'-diphosphate + [thioredoxin]-disulfide + H2O = a ribonucleoside 5'-diphosphate + [thioredoxin]-dithiol. Functionally, ribonucleoside-diphosphate reductase holoenzyme provides the precursors necessary for viral DNA synthesis. Allows virus growth in non-dividing cells, as well as reactivation from latency in infected hosts. Catalyzes the biosynthesis of deoxyribonucleotides from the corresponding ribonucleotides. The polypeptide is Ribonucleoside-diphosphate reductase small subunit (Gallid herpesvirus 2 (strain Chicken/Md5/ATCC VR-987) (GaHV-2)).